Here is a 440-residue protein sequence, read N- to C-terminus: Diels-Alderase mycB (440 aa).

Positions 1–18 (MGYLVKLACGLLLPLATA) are cleaved as a signal peptide. N-linked (GlcNAc...) asparagine glycosylation is found at asparagine 80, asparagine 155, and asparagine 332.

This sequence belongs to the Diels-Alderase family.

It carries out the reaction (5S)-5-(2-methylpropyl)-3-[(2E,6R,8E,10E,12E)-6,8,10,12-tetramethyltetradeca-2,8,10,12-tetraenoyl]-2,5-dihydro-1H-pyrrol-2-one = (5S)-3-[(1S,2R,4aR,6R,8aS)-2-(but-2-en-2-yl)-3,4a,6-trimethyl-1,2,4a,5,6,7,8,8a-octahydronaphthalene-1-carbonyl]-5-(2-methylpropyl)-2,5-dihydro-1H-pyrrol-2-one. The catalysed reaction is (5Z)-5-(2-methylpropylidene)-3-[(2E,6R,8E,10E,12E)-6,8,10,12-tetramethyltetradeca-2,8,10,12-tetraenoyl]-2,5-dihydro-1H-pyrrol-2-one = myceliothermophin E. Its pathway is mycotoxin biosynthesis. Functionally, diels-Alderase; part of the gene cluster that mediates the biosynthesis of myceliothermophins, mycotoxins that contain a trans-fused decalin ring system connected to a conjugated 3-pyrrolin-2-one moiety and that have potential anti-tumor properties. The polyketide synthase module (PKS) of the PKS-NRPS mycA is responsible for the synthesis of the octaketide backbone. The downstream nonribosomal peptide synthetase (NRPS) module then amidates the carboxyl end of the octaketide with a leucine. A reductase-like domain (R) at the C-terminus catalyzes the reductive release of the polyketide-amino acid intermediate. Because mycA lacks a designated enoylreductase (ER) domain, the required activity is provided the enoyl reductase mycC. Following mycA-catalyzed construction and release of aminoacyl polyketide aldehyde, Knoevenagel condensation yields the expected ketone. This C18 keto acyclic precursor is the substrate of the Diels-Alderase mycB, that catalyzes the Diels-Alder cycloaddition to produce myceliothermophin E. A yet unknown oxygenase involved in the production of myceliothermophin A, via substitution with a hydroxyl group at the C21, has still to be identified. In Thermothelomyces thermophilus (strain ATCC 42464 / BCRC 31852 / DSM 1799) (Sporotrichum thermophile), this protein is Diels-Alderase mycB.